Here is a 437-residue protein sequence, read N- to C-terminus: MSEFDELKYLTGFGNEHATSDPRVPDALPVGQNSPQKCSHGLYAEQLSGTAFTAPRSQNQRSWLYRIRPSVIHRPFEAMKENDQHWTNNFSSIPPNPNQYRWNPFPLPTKEGVTFVDNLYTVCGGGDVISRTGLAIHQFSCNASMEHTAMYNSDGDFLIVPQQGALEITTEFGRLLVNPQEIAVIPQGIRFSVAVRGPSRGYILEVYGTHFQLPDLGPIGANGLANPRDFEAPVAWFEDLDVEFTIINKYQGSWFQAKQGHSPFDVVGWHGNYVPYKYDLKKFMVINTVSFDHCDPSIFTVLTAPSVKHGTAIADFVIFPPRWGCADNTFRPPYYHRNCMSEYMGLITGCYEAKEGGFKPGGGSLHSMMTPHGPDFNCFEMASNADLKPQRVAEGTMSFMFESSLNMAITNWAVYQNVDKDYYKDWQPLKKHFTMPK.

The segment at 15–34 (NEHATSDPRVPDALPVGQNS) is disordered. The Fe cation site is built by H336, E342, and H372.

Belongs to the homogentisate dioxygenase family. Requires Fe cation as cofactor. As to expression, expressed in the hypodermis and intestine.

It catalyses the reaction homogentisate + O2 = 4-maleylacetoacetate + H(+). Its pathway is amino-acid degradation; L-phenylalanine degradation; acetoacetate and fumarate from L-phenylalanine: step 4/6. Functionally, plays a role in the tyrosine degradation pathway. The polypeptide is Homogentisate 1,2-dioxygenase (Caenorhabditis elegans).